The chain runs to 373 residues: MYTLKQDRPHPVPPPPPLTMDHLQHGYSTNTPVTLPGIPEAARSVSTVYEGRIYSLDVVQQPIRARMCGFGDKDRRPLTPPPCIRLIVRDATTQKEIDINEIDTSFYVLTVDLWNAEGTSEVNLVRHSATSPSISTATSSAYPPPANIMPFPQYAQTHGYPQTAYPPYYGGQPGYNPHAGYQYPQGGPDPYYPGLPAASTYYPPGTPTQALGPQSALGPHISSASTGMFTRNLIGSLSASAFRLTDPDDKIGVWFVLQDLSVRTEGSFRLKMNFVNVGTQSQAQDQSPGGTPSSPVINVGSAPVLASAFSEVFQVYSAKKFPGVIESTPLSKCFAFQGIKIPIRKDGVKGPRGGQSHGSKGQDGEGEDWENEG.

The segment covering 1–10 (MYTLKQDRPH) has biased composition (basic and acidic residues). 2 disordered regions span residues 1-26 (MYTLKQDRPHPVPPPPPLTMDHLQHG) and 344-373 (RKDGVKGPRGGQSHGSKGQDGEGEDWENEG). Residues 48-344 (VYEGRIYSLD…AFQGIKIPIR (297 aa)) form the Velvet domain. Over residues 364–373 (GEGEDWENEG) the composition is skewed to acidic residues.

The protein belongs to the velvet family. VelB subfamily. Component of the heterotrimeric velvet complex composed of LAE1, VEL1 and VEL2; VEL1A acting as a bridging protein between LAE1 and VEL2. Forms a heterodimeric complex with VOS1; the formation of the VEL2-VOS1 complex is light-dependent.

The protein resides in the nucleus. Its subcellular location is the cytoplasm. In terms of biological role, component of the velvet transcription factor complex that controls sexual/asexual developmental ratio in response to light, promoting sexual development in the darkness while stimulating asexual sporulation under illumination. The velvet complex acts as a global regulator for secondary metabolite gene expression. Component of the RYP2-RYP3 heterodimeric complex that plays a dual role in activating genes associated with spore maturation and repressing certain development-associated genes. The complex binds DNA through the DNA-binding domain of RYP2 that recognizes an 11-nucleotide consensus sequence 5'-CTGGCCGCGGC-3' consisting of two motifs in the promoters of key developmental regulatory genes. Required for viable spore production and regulation of sporulation in response to temperature, as well as for the switch to yeast-form in the presence of host cells. The sequence is that of Velvet complex subunit RYP3 (RYP3) from Ajellomyces capsulatus (Darling's disease fungus).